A 1044-amino-acid polypeptide reads, in one-letter code: Eukaryotic translation initiation factor 3 subunit A (1044 aa).

The stretch at L92–A121 forms a coiled coil. Residues M339 to F523 enclose the PCI domain. A coiled-coil region spans residues I611 to G907. Basic and acidic residues predominate over residues S797–R901. The tract at residues S797–S1044 is disordered. Composition is skewed to low complexity over residues K943–A956 and S1006–T1017.

It belongs to the eIF-3 subunit A family. As to quaternary structure, component of the eukaryotic translation initiation factor 3 (eIF-3) complex.

Its subcellular location is the cytoplasm. RNA-binding component of the eukaryotic translation initiation factor 3 (eIF-3) complex, which is involved in protein synthesis of a specialized repertoire of mRNAs and, together with other initiation factors, stimulates binding of mRNA and methionyl-tRNAi to the 40S ribosome. The eIF-3 complex specifically targets and initiates translation of a subset of mRNAs involved in cell proliferation. This Aspergillus clavatus (strain ATCC 1007 / CBS 513.65 / DSM 816 / NCTC 3887 / NRRL 1 / QM 1276 / 107) protein is Eukaryotic translation initiation factor 3 subunit A (tif32).